Here is a 229-residue protein sequence, read N- to C-terminus: Non-structural protein V (229 aa).

2 stretches are compositionally biased toward polar residues: residues A30–T46 and G82–P112. Positions A30–P112 are disordered. Zn(2+) contacts are provided by H178, C197, C201, C213, C215, C218, C222, and C225.

Belongs to the paramyxoviruses V protein family.

In terms of biological role, blocks host interferon signaling. The chain is Non-structural protein V (P/V) from Homo sapiens (Human).